Reading from the N-terminus, the 339-residue chain is Dihydroorotase (339 aa).

Zn(2+) is bound by residues His12 and His14. Substrate is bound by residues 14-16 (HVR) and Asn40. The Zn(2+) site is built by Lys94, His133, His167, and Asp239. Residue Lys94 is modified to N6-carboxylysine. His133 is a substrate binding site. Asp239 is a catalytic residue. Positions 243 and 255 each coordinate substrate.

It belongs to the metallo-dependent hydrolases superfamily. DHOase family. Class II DHOase subfamily. Homodimer. It depends on Zn(2+) as a cofactor.

It carries out the reaction (S)-dihydroorotate + H2O = N-carbamoyl-L-aspartate + H(+). Its pathway is pyrimidine metabolism; UMP biosynthesis via de novo pathway; (S)-dihydroorotate from bicarbonate: step 3/3. Catalyzes the reversible cyclization of carbamoyl aspartate to dihydroorotate. The chain is Dihydroorotase from Helicobacter acinonychis (strain Sheeba).